The chain runs to 301 residues: Thyroxine 5-deiodinase (301 aa).

The Cytoplasmic portion of the chain corresponds to 1 to 41 (MSRQAAPRWVVGEGRGTLGGAATMLRSLLLHSLRLCSQTAS). Residues 42–64 (CLVLFPRFLGTAFMLWLLDFLCI) form a helical; Signal-anchor for type II membrane protein membrane-spanning segment. Residues 65 to 301 (RKHLLGRRRR…QLHGPQPRRV (237 aa)) are Extracellular-facing. Residue Sec-167 is part of the active site. A non-standard amino acid (selenocysteine) is located at residue Sec-167.

The protein belongs to the iodothyronine deiodinase family. Monomer. Homodimer. May undergo minor heretodimerization with DIO1 and DIO2. Highly expressed in mammary gland. Detected at lower levels in kidney, and at very low levels in the other tissues.

The protein resides in the cell membrane. It localises to the endosome membrane. It catalyses the reaction 3,3',5'-triiodo-L-thyronine + iodide + A + H(+) = L-thyroxine + AH2. It carries out the reaction 3,3'-diiodo-L-thyronine + iodide + A + H(+) = 3,3',5-triiodo-L-thyronine + AH2. The catalysed reaction is 3-iodo-L-thyronine + iodide + A + H(+) = 3,5-diiodo-L-thyronine + AH2. The enzyme catalyses L-thyronine + iodide + A + H(+) = 3-iodo-L-thyronine + AH2. It catalyses the reaction 3',5'-diiodo-L-thyronine + iodide + A + H(+) = 3,3',5'-triiodo-L-thyronine + AH2. It carries out the reaction 3'-iodo-L-thyronine + iodide + A + H(+) = 3,3'-diiodo-L-thyronine + AH2. The catalysed reaction is 3,3',5'-triiodothyronamine + iodide + A + H(+) = 3,3',5,5'-tetraiodothyronamine + AH2. The enzyme catalyses 3',5'-diiodothyronamine + iodide + A + H(+) = 3,3',5'-triiodothyronamine + AH2. It catalyses the reaction 3,3'-diiodothyronamine + iodide + A + H(+) = 3,3',5-triiodothyronamine + AH2. It carries out the reaction 3-iodothyronamine + iodide + A + H(+) = 3,5-diiodothyronamine + AH2. The catalysed reaction is 3'-iodothyronamine + iodide + A + H(+) = 3,3'-diiodothyronamine + AH2. The enzyme catalyses thyronamine + iodide + A + H(+) = 3-iodothyronamine + AH2. In terms of biological role, plays a crucial role in the metabolism of thyroid hormones (TH) and has specific roles in TH activation and inactivation by deiodination. Catalyzes the deiodination of L-thyroxine (T4) to 3,3',5'-triiodothyronine (rT3), 3,5,3'-triiodothyronine (T3) to 3,3'-diiodothyronine (3,3'-T2), 3,5-diiodothyronine (3,5-T2) to 3-monoiodothyronine (3-T1), rT3 to 3',5'-diiodothyronine (3',5'-T2) and 3,3'-T2 to 3'-monoiodothyronine (3'-T1) via inner-ring deiodination (IRD). Catalyzes the deiodination of 3-T1 to L-thyronine (T0) via outer-ring deiodination (ORD). Catalyzes the tyrosyl ring deiodinations of 3,3',5,5'-tetraiodothyronamine, 3,3',5'-triiodothyronamine, 3,5,3'-triiodothyronamine, 3,5-diiodothyronamine, 3,3'-diiodothyronamine and 3-iodothyronamine. This Bos taurus (Bovine) protein is Thyroxine 5-deiodinase (DIO3).